The following is a 312-amino-acid chain: Beta-ketoacyl-[acyl-carrier-protein] synthase III (312 aa).

Catalysis depends on residues C112 and H237. The tract at residues 238–242 is ACP-binding; sequence QANIR. N267 is an active-site residue.

The protein belongs to the thiolase-like superfamily. FabH family. As to quaternary structure, homodimer.

It is found in the cytoplasm. It catalyses the reaction (2S)-2-methylbutanoyl-CoA + malonyl-[ACP] + H(+) = (4S)-4-methyl-3-oxohexanoyl-[ACP] + CO2 + CoA. The catalysed reaction is 2-methylpropanoyl-CoA + malonyl-[ACP] + H(+) = 4-methyl-3-oxopentanoyl-[ACP] + CO2 + CoA. It carries out the reaction 3-methylbutanoyl-CoA + malonyl-[ACP] + H(+) = 5-methyl-3-oxohexanoyl-[ACP] + CO2 + CoA. The enzyme catalyses malonyl-[ACP] + acetyl-CoA + H(+) = 3-oxobutanoyl-[ACP] + CO2 + CoA. It participates in lipid metabolism; fatty acid biosynthesis. Its function is as follows. Catalyzes the condensation reaction of fatty acid synthesis by the addition to an acyl acceptor of two carbons from malonyl-ACP. Catalyzes the first condensation reaction which initiates fatty acid synthesis and may therefore play a role in governing the total rate of fatty acid production. Possesses both acetoacetyl-ACP synthase and acetyl transacylase activities. Can use branched-chain acyl-CoAs, with a preference for 2-methylbutanoyl-CoA, the precursor of odd-numbered anteiso fatty acids, at 30 degrees Celsius, which is further increased at a low temperature. Shows weak activity with acetyl-CoA. The chain is Beta-ketoacyl-[acyl-carrier-protein] synthase III from Listeria monocytogenes serotype 1/2a (strain 10403S).